A 379-amino-acid chain; its full sequence is Cytochrome b (379 aa).

A run of 4 helical transmembrane segments spans residues 33–53 (FGSL…FLAM), 77–98 (WTIR…FIHV), 113–133 (WNVG…GYVL), and 178–198 (FFAL…IHLL). Heme b-binding residues include histidine 83 and histidine 97. Residues histidine 182 and histidine 196 each coordinate heme b. An a ubiquinone-binding site is contributed by histidine 201. 4 consecutive transmembrane segments (helical) span residues 226-246 (TKDF…ALFY), 288-308 (LGGV…PFLQ), 320-340 (LSQF…WIGG), and 347-367 (FINI…FIMP).

Belongs to the cytochrome b family. As to quaternary structure, the cytochrome bc1 complex contains 11 subunits: 3 respiratory subunits (MT-CYB, CYC1 and UQCRFS1), 2 core proteins (UQCRC1 and UQCRC2) and 6 low-molecular weight proteins (UQCRH/QCR6, UQCRB/QCR7, UQCRQ/QCR8, UQCR10/QCR9, UQCR11/QCR10 and a cleavage product of UQCRFS1). This cytochrome bc1 complex then forms a dimer. The cofactor is heme b.

The protein resides in the mitochondrion inner membrane. Component of the ubiquinol-cytochrome c reductase complex (complex III or cytochrome b-c1 complex) that is part of the mitochondrial respiratory chain. The b-c1 complex mediates electron transfer from ubiquinol to cytochrome c. Contributes to the generation of a proton gradient across the mitochondrial membrane that is then used for ATP synthesis. The polypeptide is Cytochrome b (MT-CYB) (Lepilemur sahamalazensis (Sahamalaza sportive lemur)).